The chain runs to 409 residues: Palmitoyltransferase ZDHHC23 (409 aa).

Residues 1–87 lie on the Cytoplasmic side of the membrane; that stretch reads MTQKGSMKPV…RIPWLRGAKK (87 aa). A helical transmembrane segment spans residues 88–106; sequence VNISIIPPLVLLPVFLHVA. The Lumenal segment spans residues 107–109; that stretch reads SWH. The helical transmembrane segment at 110–132 threads the bilayer; that stretch reads FLLGVVVLTSLPVLALWYYYLTH. The Cytoplasmic portion of the chain corresponds to 133–136; sequence RRKE. A helical transmembrane segment spans residues 137-157; that stretch reads QTLFFLSLGLFSLGYMYYVFL. Topologically, residues 158-165 are lumenal; sequence QEVVPKGR. The chain crosses the membrane as a helical span at residues 166 to 186; it reads VGPVQLAVLTCGLFLILLALH. At 187-302 the chain is on the cytoplasmic side; it reads RAKKNPGYLS…NSCVGESNHQ (116 aa). The interval 215-255 is disordered; sequence RKGQEKTKGFPGADMSGSLNNRTTKDDPKGSSKMPAGSPTK. In terms of domain architecture, DHHC spans 259-309; the sequence is DWCAKCQLVRPARAWHCRICGICVRRMDHHCVWINSCVGESNHQAFILALL. Residue Cys-289 is the S-palmitoyl cysteine intermediate of the active site. The helical transmembrane segment at 303–323 threads the bilayer; sequence AFILALLIFLLTSVYGITLTL. The Lumenal portion of the chain corresponds to 324-331; it reads DTICRDRS. The chain crosses the membrane as a helical span at residues 332–352; sequence VFTALFYCPGVYANYSSALSF. Position 353 (Thr-353) is a topological domain, cytoplasmic. Residues 354–374 form a helical membrane-spanning segment; sequence CVWYSVIITAGMAYIFLIQLI. The Lumenal segment spans residues 375–409; sequence NISYNVTEREVQQALRQKTGRRLLCGLIVDTGLLG.

Belongs to the DHHC palmitoyltransferase family. As to quaternary structure, interacts with NOS1.

It is found in the golgi apparatus membrane. The protein resides in the golgi apparatus. Its subcellular location is the trans-Golgi network membrane. It catalyses the reaction L-cysteinyl-[protein] + hexadecanoyl-CoA = S-hexadecanoyl-L-cysteinyl-[protein] + CoA. In terms of biological role, palmitoyltransferase that could catalyze the addition of palmitate onto various protein substrates and be involved in a variety of cellular processes. Palmitoyltransferase that mediates palmitoylation of KCNMA1, regulating localization of KCNMA1 to the plasma membrane. May be involved in NOS1 regulation and targeting to the synaptic membrane. This chain is Palmitoyltransferase ZDHHC23, found in Homo sapiens (Human).